A 127-amino-acid polypeptide reads, in one-letter code: Large ribosomal subunit protein bL17 (127 aa).

It belongs to the bacterial ribosomal protein bL17 family. As to quaternary structure, part of the 50S ribosomal subunit. Contacts protein L32.

The polypeptide is Large ribosomal subunit protein bL17 (Escherichia fergusonii (strain ATCC 35469 / DSM 13698 / CCUG 18766 / IAM 14443 / JCM 21226 / LMG 7866 / NBRC 102419 / NCTC 12128 / CDC 0568-73)).